A 499-amino-acid chain; its full sequence is MASNSKKKDVGSQYKVLFTLGHGSFGTVKLACHLKTKALVAIKMVELSKKNIRGIRAEIATLEKLQHPNIICLFQVLVTSKHINIVTEYIPGGNLFDIIKEDGPMHEEEARRIFGQVVSAVKYCHNQDIVHQDIKAQNILRDEEGNVKIIDFGLAIRCRSGTLLKRQCGTKSCFAPELVLQEPYDGKKADVWSLGVLLYFITTGYYPFRGSTMKEMEEKIATGTYDIPTHVSGQLENLIHQILTVPPEMRPSIEDIERHPWVKKTEVNNPTVTDPDYNIIEMLCGMGFDANEILESLQRKKYNESMGAYLILKAQVDKGLEHTSIISAKPVDQCPTPPPSPPAHPSISSLLLKRRASEPNFSLLHIQPSGEHRPVSLALPGHKVARSASMPPIALHYPEKKSNSSSFALHSGAVAAPSVGNSILEDELPVPPDQEYDMGACFGSTYTKQCDMETPSPPQKISRFKRMSKRIRACLAQLCCIPRAPKTKKKHTSSNKIAP.

The Protein kinase domain maps to 14-262 (YKVLFTLGHG…IEDIERHPWV (249 aa)). ATP-binding positions include 20-28 (LGHGSFGTV) and Lys-43. Asp-133 acts as the Proton acceptor in catalysis. The 41-residue stretch at 274–314 (DPDYNIIEMLCGMGFDANEILESLQRKKYNESMGAYLILKA) folds into the UBA domain.

Belongs to the protein kinase superfamily. CAMK Ser/Thr protein kinase family. Smok subfamily.

It carries out the reaction L-seryl-[protein] + ATP = O-phospho-L-seryl-[protein] + ADP + H(+). It catalyses the reaction L-threonyl-[protein] + ATP = O-phospho-L-threonyl-[protein] + ADP + H(+). Its function is as follows. May play a role in sperm motility, especially in the regulation of flagellar function. The sequence is that of Putative sperm motility kinase W from Mus musculus (Mouse).